The sequence spans 464 residues: Kynureninase 2 (464 aa).

Pyridoxal 5'-phosphate-binding positions include Leu-135, Thr-136, 163–166, Asp-248, His-251, and Tyr-273; that span reads FPSD. Lys-274 is subject to N6-(pyridoxal phosphate)lysine. Pyridoxal 5'-phosphate-binding residues include Trp-313 and Asn-341.

This sequence belongs to the kynureninase family. Homodimer. Pyridoxal 5'-phosphate serves as cofactor.

It is found in the cytoplasm. It catalyses the reaction L-kynurenine + H2O = anthranilate + L-alanine + H(+). The catalysed reaction is 3-hydroxy-L-kynurenine + H2O = 3-hydroxyanthranilate + L-alanine + H(+). It functions in the pathway amino-acid degradation; L-kynurenine degradation; L-alanine and anthranilate from L-kynurenine: step 1/1. Its pathway is cofactor biosynthesis; NAD(+) biosynthesis; quinolinate from L-kynurenine: step 2/3. Functionally, catalyzes the cleavage of L-kynurenine (L-Kyn) and L-3-hydroxykynurenine (L-3OHKyn) into anthranilic acid (AA) and 3-hydroxyanthranilic acid (3-OHAA), respectively. The sequence is that of Kynureninase 2 (bna5-2) from Aspergillus clavatus (strain ATCC 1007 / CBS 513.65 / DSM 816 / NCTC 3887 / NRRL 1 / QM 1276 / 107).